The sequence spans 156 residues: Ribosome maturation factor RimP (156 aa).

Belongs to the RimP family.

The protein localises to the cytoplasm. Its function is as follows. Required for maturation of 30S ribosomal subunits. In Anoxybacillus flavithermus (strain DSM 21510 / WK1), this protein is Ribosome maturation factor RimP.